Here is a 592-residue protein sequence, read N- to C-terminus: Membrane protein insertase YidC (592 aa).

The chain crosses the membrane as a helical span at residues 7–27 (NYFVAIALSVLILVAWQYFYV). Positions 38–74 (AEKAQQTQQVQPQQGGQQPAPGQALPGGAVPGESRDQ) are disordered. Positions 41–69 (AQQTQQVQPQQGGQQPAPGQALPGGAVPG) are enriched in low complexity. A run of 4 helical transmembrane segments spans residues 367 to 387 (LFGN…LIFF), 441 to 461 (WPIL…YITI), 486 to 506 (LFGL…WPII), and 530 to 550 (FTWM…GLVI).

Belongs to the OXA1/ALB3/YidC family. Type 1 subfamily. As to quaternary structure, interacts with the Sec translocase complex via SecD. Specifically interacts with transmembrane segments of nascent integral membrane proteins during membrane integration.

The protein localises to the cell inner membrane. Required for the insertion and/or proper folding and/or complex formation of integral membrane proteins into the membrane. Involved in integration of membrane proteins that insert both dependently and independently of the Sec translocase complex, as well as at least some lipoproteins. Aids folding of multispanning membrane proteins. In Sinorhizobium fredii (strain NBRC 101917 / NGR234), this protein is Membrane protein insertase YidC.